The primary structure comprises 389 residues: Liposome tubulation protein MamY (389 aa).

At 1-31 (MAIAAIMGDVLMLMGFNKAAFGKLNSASRAA) the chain is on the cytoplasmic side. Residues 32–52 (LIGAVIWAVLSIVYLTIFNGW) traverse the membrane as a helical segment. At 53–62 (KNLFTMLPHE) the chain is on the lumenal side. Residues 63 to 83 (FFIVLLSIALPIGLTVLILML) traverse the membrane as a helical segment. At 84–389 (SRIVKSVDTL…TETAPDSGMD (306 aa)) the chain is on the cytoplasmic side.

This sequence belongs to the magnetosome MamY family.

The protein localises to the magnetosome membrane. Functionally, causes tubulation when added to magnetosome-derived liposomes, binds liposomes; may be involved in constriction of the cell inner membrane to form mature magnetosomes. Binds preferentially to cardiolipin, a component of bacterial membranes, with very poor to no binding of other tested (phospho)lipids. Addition of cardiolipin to magnetosome-derived lipids increases tubulation. May function with MamX, MamZ amd Mms6. The chain is Liposome tubulation protein MamY from Paramagnetospirillum magneticum (strain ATCC 700264 / AMB-1) (Magnetospirillum magneticum).